The sequence spans 264 residues: H-2 class II histocompatibility antigen, I-A beta chain (264 aa).

Positions 1 to 31 (MVWLPRVPCVAAVILLLTVLSPPVALVRDSR) are cleaved as a signal peptide. The tract at residues 32-121 (PWFLEYCKSE…IFDNFLVPRR (90 aa)) is beta-1. Topologically, residues 32-225 (PWFLEYCKSE…KAQSTSAQNK (194 aa)) are extracellular. Disulfide bonds link cysteine 42/cysteine 106 and cysteine 144/cysteine 200. A glycan (N-linked (GlcNAc...) asparagine) is linked at asparagine 46. Residues 122–215 (VEPTVTVYPT…SLTDPVTVEW (94 aa)) are beta-2. One can recognise an Ig-like C1-type domain in the interval 124-214 (PTVTVYPTKT…PSLTDPVTVE (91 aa)). Positions 216–225 (KAQSTSAQNK) are connecting peptide. Residues 226-248 (MLSGVGGFVLGLLFLRAGLFIYF) traverse the membrane as a helical segment. Topologically, residues 249 to 264 (RNQKGQSGLQPTGLLS) are cytoplasmic.

It belongs to the MHC class II family. Ubiquitinated in immature dendritic cells leading to down-regulation of MHC class II.

Its subcellular location is the membrane. This Mus musculus (Mouse) protein is H-2 class II histocompatibility antigen, I-A beta chain (H2-Eb1).